We begin with the raw amino-acid sequence, 253 residues long: Imidazole glycerol phosphate synthase subunit HisF (253 aa).

Residues D11 and D130 contribute to the active site.

Belongs to the HisA/HisF family. As to quaternary structure, heterodimer of HisH and HisF.

Its subcellular location is the cytoplasm. The catalysed reaction is 5-[(5-phospho-1-deoxy-D-ribulos-1-ylimino)methylamino]-1-(5-phospho-beta-D-ribosyl)imidazole-4-carboxamide + L-glutamine = D-erythro-1-(imidazol-4-yl)glycerol 3-phosphate + 5-amino-1-(5-phospho-beta-D-ribosyl)imidazole-4-carboxamide + L-glutamate + H(+). The protein operates within amino-acid biosynthesis; L-histidine biosynthesis; L-histidine from 5-phospho-alpha-D-ribose 1-diphosphate: step 5/9. Functionally, IGPS catalyzes the conversion of PRFAR and glutamine to IGP, AICAR and glutamate. The HisF subunit catalyzes the cyclization activity that produces IGP and AICAR from PRFAR using the ammonia provided by the HisH subunit. The sequence is that of Imidazole glycerol phosphate synthase subunit HisF from Acetivibrio thermocellus (strain ATCC 27405 / DSM 1237 / JCM 9322 / NBRC 103400 / NCIMB 10682 / NRRL B-4536 / VPI 7372) (Clostridium thermocellum).